The following is a 134-amino-acid chain: MSNTAQNEKRLPVGKDISTRRRTARARRHFRIRKTLSGTPETPRLVIHRTSRHMHAQVIDDVAGHTLVAASTMEADVRAMEGDKKARGAKVGQLIAERAKAAGIEAVVFDRAGYKYHGRVAALADAAREGGLKF.

The disordered stretch occupies residues 1 to 25 (MSNTAQNEKRLPVGKDISTRRRTAR). Positions 7 to 19 (NEKRLPVGKDIST) are enriched in basic and acidic residues.

It belongs to the universal ribosomal protein uL18 family. As to quaternary structure, part of the 50S ribosomal subunit; part of the 5S rRNA/L5/L18/L25 subcomplex. Contacts the 5S and 23S rRNAs.

This is one of the proteins that bind and probably mediate the attachment of the 5S RNA into the large ribosomal subunit, where it forms part of the central protuberance. The sequence is that of Large ribosomal subunit protein uL18 from Corynebacterium jeikeium (strain K411).